Here is a 78-residue protein sequence, read N- to C-terminus: Conotoxin TsMEKL-P012 (78 aa).

An N-terminal signal peptide occupies residues 1 to 19 (MEKLTILLLLAAVLVLAQA). A propeptide spanning residues 20–38 (LIKKGGGEKRQKEKINFLS) is cleaved from the precursor. Intrachain disulfides connect C52–C66, C59–C70, and C65–C75.

It belongs to the conotoxin O2 superfamily. Expressed by the venom duct.

It is found in the secreted. This Conus tessulatus (Tessellate cone) protein is Conotoxin TsMEKL-P012.